Consider the following 299-residue polypeptide: Streptogrisin-B (299 aa).

The first 38 residues, 1 to 38 (MRIKRTSNRSNAARRVRTTAVLAGLAAVAALAVPTANA), serve as a signal peptide directing secretion. A propeptide spanning residues 39–114 (ETPRTFSANQ…ERTPGKFTKL (76 aa)) is cleaved from the precursor. An intrachain disulfide couples C128 to C148. Residues H147, D177, and S255 each act as charge relay system in the active site. The cysteines at positions 249 and 276 are disulfide-linked.

The protein belongs to the peptidase S1 family. Monomer.

The enzyme catalyses Hydrolysis of proteins with trypsin-like specificity.. Functionally, has a primary specificity for large aliphatic or aromatic amino acids. The protein is Streptogrisin-B (sprB) of Streptomyces griseus.